We begin with the raw amino-acid sequence, 296 residues long: MDTEKMITTPTHWPSPAKLNLFLYITGRRDNGYHELQTLFQFVDFGDELTVTANRETSSITITPEIPGVATEDNLIWKAATALQQHTSTTFGADIQLKKVLPMGGGIGGGSSNAATVLVALNHLWQLNLSDDQLAEIGLKLGADVPVFVRGHAAFAEGVGEQLQPANPDEKWYLVVKPQVSIATVDIFTHSELTRNTPKRALSTLLEQEYVNDCEKIVRMLYPEVDKQLSWLLQYAPSRLTGTGSCVFAEFSSKKEAELVLEQLPDTVSAFVAKGRNISPLKETLAEYQSAHPQSI.

Lys18 is a catalytic residue. Pro102–Ser112 is a binding site for ATP. Asp144 is a catalytic residue.

Belongs to the GHMP kinase family. IspE subfamily.

It catalyses the reaction 4-CDP-2-C-methyl-D-erythritol + ATP = 4-CDP-2-C-methyl-D-erythritol 2-phosphate + ADP + H(+). The protein operates within isoprenoid biosynthesis; isopentenyl diphosphate biosynthesis via DXP pathway; isopentenyl diphosphate from 1-deoxy-D-xylulose 5-phosphate: step 3/6. Catalyzes the phosphorylation of the position 2 hydroxy group of 4-diphosphocytidyl-2C-methyl-D-erythritol. This Vibrio atlanticus (strain LGP32) (Vibrio splendidus (strain Mel32)) protein is 4-diphosphocytidyl-2-C-methyl-D-erythritol kinase.